The primary structure comprises 157 residues: Protein E6 (157 aa).

Zinc fingers lie at residues 43-80 and 117-153; these read CRFC…CSGC and CQYC…CRHC.

Belongs to the papillomaviridae E6 protein family. Forms homodimers. Interacts with ubiquitin-protein ligase UBE3A/E6-AP; this interaction stimulates UBE3A ubiquitin activity. Interacts with host BAK1.

Its subcellular location is the host cytoplasm. The protein localises to the host nucleus. Functionally, plays a major role in the induction and maintenance of cellular transformation. E6 associates with host UBE3A/E6-AP ubiquitin-protein ligase and modulates its activity. Protects host keratinocytes from apoptosis by mediating the degradation of host BAK1. May also inhibit host immune response. The sequence is that of Protein E6 from Human papillomavirus 23.